We begin with the raw amino-acid sequence, 465 residues long: Endo-1,3-1,4-beta-glycanase EglC (465 aa).

Hemolysin-type calcium-binding repeat units follow at residues 33-50 (YGTAGNDSMWADSSVDVT), 105-122 (FGNSASNIISGGSGSQTI), and 123-140 (NGGAGNDVLTGAGGADTF). The 250-residue stretch at 213 to 462 (LDRSVLTQTF…YVKAYSLDAD (250 aa)) folds into the GH16 domain. The active-site Nucleophile is the E349. Catalysis depends on E354, which acts as the Proton donor.

The protein belongs to the glycosyl hydrolase 16 family.

The protein localises to the secreted. It functions in the pathway glycan metabolism; exopolysaccharide biosynthesis. In terms of biological role, cleaves high molecular weight succinoglycan to yield LMW succinoglycan. Dynamically regulates the molecular weight distribution of succinoglycan by cleaving nascent succinoglycan only during a limited period after its synthesis, perhaps before it undergoes a time-dependent change in its conformation or aggregation state. The polypeptide is Endo-1,3-1,4-beta-glycanase EglC (eglC) (Rhizobium meliloti (strain 1021) (Ensifer meliloti)).